The primary structure comprises 94 residues: Co-chaperonin GroES (94 aa).

This sequence belongs to the GroES chaperonin family. In terms of assembly, heptamer of 7 subunits arranged in a ring. Interacts with the chaperonin GroEL.

The protein localises to the cytoplasm. Functionally, together with the chaperonin GroEL, plays an essential role in assisting protein folding. The GroEL-GroES system forms a nano-cage that allows encapsulation of the non-native substrate proteins and provides a physical environment optimized to promote and accelerate protein folding. GroES binds to the apical surface of the GroEL ring, thereby capping the opening of the GroEL channel. The protein is Co-chaperonin GroES of Alkaliphilus metalliredigens (strain QYMF).